The sequence spans 2181 residues: Genome polyprotein (2181 aa).

G80 carries N-myristoyl glycine; by host lipidation. Interaction with host receptor ANTXR1 regions lie at residues 316-337 and 761-772; these read DYRTGKNMPFQSLGTYYRPPNW and RFGLYANPSGSG. The region spanning 1165 to 1333 is the SF3 helicase domain; that stretch reads LGKTNLAQSL…YKKHTRLNFD (169 aa). 1197–1204 lines the ATP pocket; the sequence is GKPGCGKS. Positions 1472-1500 are disordered; it reads EETESEGSVKAPRSENAYDGPKKNSKPPG. Y1489 is subject to O-(5'-phospho-RNA)-tyrosine. A Peptidase C3 domain is found at 1511–1704; sequence NVDMGFEAAV…AGTYISKLGL (194 aa). The active-site For protease 3C activity and deubiquitinase activity is the H1556. The active-site For protease 3C activity is the D1592. Residue C1668 is the For protease 3C activity and deubiquitinase activity of the active site. The RdRp catalytic domain maps to 1950-2068; the sequence is KNTYDVDYSA…GTDYDLDFNE (119 aa). Residues D1956 and D2054 each act as for RdRp activity in the active site.

In terms of assembly, interacts with host entry receptor ANTRX1. Interacts with host IRF3; this interaction is involved in the suppression of IRF3 and IRF7 expression and phosphorylation by the virus. Interacts with host IRF7; this interaction is involved in the suppression of IRF3 and IRF7 expression and phosphorylation by the virus. Interacts with host MAVS; this interaction allows the cleavage of MAVS and subsequent suppression of host immunity. Interacts with host TRIF; this interaction allows the cleavage of TRIF and subsequent suppression of host immunity. Interacts with host TANK; this interaction allows the cleavage of TANK and subsequent suppression of host immunity. Interacts with host RIGI. Interacts with host TBK1. Interacts with host TRAF3. In terms of processing, specific enzymatic cleavages by the viral protease in vivo yield a variety of precursors and mature proteins. The polyprotein seems to be cotranslationally cleaved at the 2A/2B junction by a ribosomal skip from one codon to the next without formation of a peptide bond. This process would release the P1-2A peptide from the translational complex. During virion maturation, immature virions are rendered infectious following cleavage of VP0 into VP4 and VP2. This maturation seems to be an autocatalytic event triggered by the presence of RNA in the capsid and is followed by a conformational change of the particle. Post-translationally, myristoylation is required during RNA encapsidation and formation of the mature virus particle. In terms of processing, uridylylated by the polymerase and is covalently linked to the 5'-end of genomic RNA. This uridylylated form acts as a nucleotide-peptide primer for the polymerase.

It is found in the virion. The protein resides in the host cytoplasm. Its subcellular location is the host nucleus. It localises to the host nucleolus. The protein localises to the host cytoplasmic vesicle membrane. It carries out the reaction RNA(n) + a ribonucleoside 5'-triphosphate = RNA(n+1) + diphosphate. It catalyses the reaction Selective cleavage of Gln-|-Gly bond in the poliovirus polyprotein. In other picornavirus reactions Glu may be substituted for Gln, and Ser or Thr for Gly.. The enzyme catalyses Thiol-dependent hydrolysis of ester, thioester, amide, peptide and isopeptide bonds formed by the C-terminal Gly of ubiquitin (a 76-residue protein attached to proteins as an intracellular targeting signal).. The catalysed reaction is ATP + H2O = ADP + phosphate + H(+). In terms of biological role, forms an icosahedral capsid of pseudo T=3 symmetry with capsid proteins VP2 and VP3. Together they form an icosahedral capsid composed of 60 copies of each VP1, VP2, and VP3, with a diameter of approximately 325 Angstroms. VP4 lies on the inner surface of the protein shell formed by VP1, VP2 and VP3. All the three latter proteins contain a beta-sheet structure called beta-barrel jelly roll. VP1 is situated at the 12 fivefold axes, whereas VP2 and VP3 are located at the quasi-sixfold axes. Binds the host receptor ANTXR1 for attachment and uncoating (entry). Functionally, forms an icosahedral capsid of pseudo T=3 symmetry with capsid proteins VP2 and VP3. Together they form an icosahedral capsid composed of 60 copies of each VP1, VP2, and VP3, with a diameter of approximately 270 Angstroms. VP4 lies on the inner surface of the protein shell formed by VP1, VP2 and VP3. All the three latter proteins contain a beta-sheet structure called beta-barrel jelly roll. VP1 is situated at the 12 fivefold axes, whereas VP2 and VP3 are located at the quasi-sixfold axes. Binds the host receptor ANTXR1 for attachment and uncoating (entry). Its function is as follows. Forms an icosahedral capsid of pseudo T=3 symmetry with capsid proteins VP2 and VP3. Together they form an icosahedral capsid composed of 60 copies of each VP1, VP2, and VP3, with a diameter of approximately 270 Angstroms. VP4 lies on the inner surface of the protein shell formed by VP1, VP2 and VP3. All the three latter proteins contain a beta-sheet structure called beta-barrel jelly roll. VP1 is situated at the 12 fivefold axes, whereas VP2 and VP3 are located at the quasi-sixfold axes. Vp3 also seems to be involved in the binding to host receptor ANTXR1 for attachment and uncoating (entry). Lies on the inner surface of the capsid shell. After binding to the host receptor, the capsid undergoes conformational changes. Capsid protein VP4 is released, capsid protein VP1 N-terminus is externalized, and together, they shape a pore in the host membrane through which the viral genome is translocated into the host cell cytoplasm. After genome has been released, the channel shrinks. In terms of biological role, VP0 precursor is a component of immature procapsids. Functionally, mediates self-processing of the polyprotein by a translational effect termed 'ribosome skipping'. Mechanistically, 2A-mediated cleavage occurs between the C-terminal glycine and the proline of the downstream protein 2B. Its function is as follows. Plays an essential role in the virus replication cycle by acting as a viroporin. Creates a pore in the host endoplasmic reticulum and as a consequence releases Ca2+ in the cytoplasm of infected cell. In turn, high levels of cytoplasmic calcium may trigger membrane trafficking and transport of viral ER-associated proteins to viroplasms, sites of viral genome replication. Associates with and induces structural rearrangements of intracellular membranes. In terms of biological role, covalently linked to the 5'-end of both the positive-strand and negative-strand genomic RNAs. Acts as a genome-linked replication primer. Functionally, cysteine protease that generates mature viral proteins from the precursor polyprotein. Inactivates crucial host adapter molecules in order to suppress antiviral type-I interferon (type-I IFN) and NF-kappaB production to escape host antiviral innate immune responses. Deubiquitinase that acts on both lysine-48- and lysine-63-linked polyubiquitin chains and inhibits the ubiquitination of the ATP-dependent RNA helicase RIGI, TANK-binding kinase 1 (TBK1), and TNF receptor-associated factor 3 (TRAF3), thereby blocking the expression of IFN-beta and IFN stimulated gene 54 (ISG54). Induces host IRF3 and IRF7 degradation thereby suppressing IRF3- and IRF7-induced type-I IFN production. Also decreases host IRF3 phosphorylation leading to negligible IRF3 activation. Cleaves host MAVS, TRIF and TANK, which are then unable to regulate pattern recognition receptor (PRR)-mediated type-I IFN production. Inhibits the integrated stress response (ISR) in the infected cell by disrupting eIF4GI-G3BP1 interaction. Stress granule formation is thus inhibited. Its function is as follows. Replicates the genomic and antigenomic RNAs by recognizing replications specific signals. Performs VPg uridylylation. The polypeptide is Genome polyprotein (Sus scrofa (Pig)).